Consider the following 191-residue polypeptide: NAD(P)H-dependent FMN reductase LOT6 (191 aa).

Residues arginine 11, 94-97 (QYNW), and tyrosine 124 each bind FMN.

Homodimer.

It is found in the cytoplasm. It localises to the nucleus. It catalyses the reaction FMNH2 + NADP(+) = FMN + NADPH + 2 H(+). The catalysed reaction is FMNH2 + NAD(+) = FMN + NADH + 2 H(+). Has several reductase activities that are NAD(P)H-dependent and involve FMN as a cofactor, ferricyanide being the best substrate for reduction. May be involved in ferric iron assimilation. The chain is NAD(P)H-dependent FMN reductase LOT6 (LOT6) from Saccharomyces cerevisiae (strain ATCC 204508 / S288c) (Baker's yeast).